Reading from the N-terminus, the 78-residue chain is Toxin OAIP 5 (78 aa).

The signal sequence occupies residues 1-19; that stretch reads MLIVILTCALLVIYHAAAA. Residues 20 to 40 constitute a propeptide that is removed on maturation; it reads EELEAKDVIESKALATLDEER. 3 cysteine pairs are disulfide-bonded: cysteine 43–cysteine 56, cysteine 47–cysteine 70, and cysteine 64–cysteine 75.

Belongs to the neurotoxin 12 (Hwtx-2) family. 05 (OAIP-5) subfamily. In terms of tissue distribution, expressed by the venom gland.

The protein resides in the secreted. Functionally, probable ion channel inhibitor. Shows insecticidal activity when injected into mealworms. This chain is Toxin OAIP 5, found in Selenotypus plumipes (Australian featherleg tarantula).